Here is a 375-residue protein sequence, read N- to C-terminus: Phytanoyl-CoA hydroxylase-interacting protein-like (375 aa).

Residues Ser11, Ser12, and Ser15 each carry the phosphoserine modification. Residue Asn22 is glycosylated (N-linked (GlcNAc...) asparagine). At Ser24 the chain carries Phosphoserine. Asn36 carries an N-linked (GlcNAc...) asparagine glycan. The Fibronectin type-III domain occupies 51 to 160; it reads VPHNIKINNI…EIIEFCTADY (110 aa).

The protein belongs to the PHYHIP family.

May play a role in the development of the central system. This Rattus norvegicus (Rat) protein is Phytanoyl-CoA hydroxylase-interacting protein-like (Phyhipl).